Reading from the N-terminus, the 358-residue chain is Feruloyl CoA ortho-hydroxylase F6H1-2 (358 aa).

In terms of domain architecture, Fe2OG dioxygenase spans 200–308 (TKESLLMGSK…RISVPIFVNP (109 aa)). Tyr-216 serves as a coordination point for 2-oxoglutarate. The Fe cation site is built by His-231, Asp-233, and His-289. Residues Arg-299 and Ser-301 each coordinate 2-oxoglutarate.

Belongs to the iron/ascorbate-dependent oxidoreductase family. It depends on L-ascorbate as a cofactor. Requires Fe(2+) as cofactor. As to expression, expressed at low levels in tubers, underground stems, leaves and petioles.

The catalysed reaction is (E)-feruloyl-CoA + 2-oxoglutarate + O2 = (E)-6-hydroxyferuloyl-CoA + succinate + CO2. It functions in the pathway phenylpropanoid metabolism. In terms of biological role, 2-oxoglutarate (OG)- and Fe(II)-dependent dioxygenase (2OGD) involved in scopoletin biosynthesis. Converts feruloyl CoA into 6'-hydroxyferuloyl CoA, and, at low efficiency, caffeoyl-CoA into 6'-hydroxycaffeate, but has no activity with p-coumaroyl-CoA. The polypeptide is Feruloyl CoA ortho-hydroxylase F6H1-2 (Ipomoea batatas (Sweet potato)).